We begin with the raw amino-acid sequence, 453 residues long: SH2 domain-containing protein 4A (453 aa).

The stretch at 96 to 127 (EIIAEQARREAEKEAEQLRKKQEVELSQLSTL) forms a coiled coil. Positions 280–301 (AVKRPPIPPKPKLPPSANNSSI) are disordered. The segment covering 284–293 (PPIPPKPKLP) has biased composition (pro residues). The SH2 domain maps to 347–439 (WFHGIISRQE…LGRELLRFPC (93 aa)).

Its subcellular location is the cytoplasm. In terms of biological role, inhibits estrogen-induced cell proliferation. The chain is SH2 domain-containing protein 4A (sh2d4a) from Xenopus tropicalis (Western clawed frog).